Here is a 94-residue protein sequence, read N- to C-terminus: Large ribosomal subunit protein uL23 (94 aa).

The protein belongs to the universal ribosomal protein uL23 family. In terms of assembly, part of the 50S ribosomal subunit. Contacts protein L29, and trigger factor when it is bound to the ribosome.

One of the early assembly proteins it binds 23S rRNA. One of the proteins that surrounds the polypeptide exit tunnel on the outside of the ribosome. Forms the main docking site for trigger factor binding to the ribosome. The polypeptide is Large ribosomal subunit protein uL23 (Trichlorobacter lovleyi (strain ATCC BAA-1151 / DSM 17278 / SZ) (Geobacter lovleyi)).